Here is a 200-residue protein sequence, read N- to C-terminus: Recombination protein RecR (200 aa).

The segment at 60 to 75 adopts a C4-type zinc-finger fold; it reads CVYCQALTEDDVCNIC. Residues 83–177 form the Toprim domain; the sequence is TKLCIIESML…KISRIGFGVP (95 aa).

The protein belongs to the RecR family.

Its function is as follows. May play a role in DNA repair. It seems to be involved in an RecBC-independent recombinational process of DNA repair. It may act with RecF and RecO. The chain is Recombination protein RecR from Francisella tularensis subsp. tularensis (strain SCHU S4 / Schu 4).